An 83-amino-acid polypeptide reads, in one-letter code: Putative beta-neurotoxin RjAa10f (83 aa).

The signal sequence occupies residues 1–18 (MKILIFIIASFMLIGVWC). The LCN-type CS-alpha/beta domain occupies 19–82 (KEGYPMGRDG…VWDPNNNKCV (64 aa)). 4 cysteine pairs are disulfide-bonded: C29/C81, C33/C55, C40/C62, and C44/C64.

This sequence belongs to the long (4 C-C) scorpion toxin superfamily. Sodium channel inhibitor family. Beta subfamily. As to expression, expressed by the venom gland.

Its subcellular location is the secreted. In terms of biological role, beta toxins bind voltage-independently at site-4 of sodium channels (Nav) and shift the voltage of activation toward more negative potentials thereby affecting sodium channel activation and promoting spontaneous and repetitive firing. The polypeptide is Putative beta-neurotoxin RjAa10f (Rhopalurus junceus (Caribbean blue scorpion)).